We begin with the raw amino-acid sequence, 603 residues long: Proline--tRNA ligase (603 aa).

Belongs to the class-II aminoacyl-tRNA synthetase family. ProS type 1 subfamily. In terms of assembly, homodimer.

It is found in the cytoplasm. It catalyses the reaction tRNA(Pro) + L-proline + ATP = L-prolyl-tRNA(Pro) + AMP + diphosphate. Catalyzes the attachment of proline to tRNA(Pro) in a two-step reaction: proline is first activated by ATP to form Pro-AMP and then transferred to the acceptor end of tRNA(Pro). As ProRS can inadvertently accommodate and process non-cognate amino acids such as alanine and cysteine, to avoid such errors it has two additional distinct editing activities against alanine. One activity is designated as 'pretransfer' editing and involves the tRNA(Pro)-independent hydrolysis of activated Ala-AMP. The other activity is designated 'posttransfer' editing and involves deacylation of mischarged Ala-tRNA(Pro). The misacylated Cys-tRNA(Pro) is not edited by ProRS. This Synechocystis sp. (strain ATCC 27184 / PCC 6803 / Kazusa) protein is Proline--tRNA ligase.